The chain runs to 813 residues: Calpain-7 (813 aa).

Met1 is modified (N-acetylmethionine). Residue Thr95 is modified to Phosphothreonine. Positions Arg232–Pro540 constitute a Calpain catalytic domain. Residues Cys290, His458, and Asn478 contribute to the active site. The interval Ala541–Ala701 is domain III. Residues Gly702–Gln813 form a domain N region.

The protein belongs to the peptidase C2 family. Ubiquitous.

It is found in the nucleus. In terms of biological role, calcium-regulated non-lysosomal thiol-protease. In Mus musculus (Mouse), this protein is Calpain-7 (Capn7).